Here is a 342-residue protein sequence, read N- to C-terminus: tRNA N6-adenosine threonylcarbamoyltransferase (342 aa).

Fe cation contacts are provided by His115 and His119. Residues 138 to 142 (LVSGG), Asp171, Gly184, and Asn276 contribute to the substrate site. Asp304 provides a ligand contact to Fe cation.

It belongs to the KAE1 / TsaD family. Fe(2+) is required as a cofactor.

The protein resides in the cytoplasm. It catalyses the reaction L-threonylcarbamoyladenylate + adenosine(37) in tRNA = N(6)-L-threonylcarbamoyladenosine(37) in tRNA + AMP + H(+). In terms of biological role, required for the formation of a threonylcarbamoyl group on adenosine at position 37 (t(6)A37) in tRNAs that read codons beginning with adenine. Is involved in the transfer of the threonylcarbamoyl moiety of threonylcarbamoyl-AMP (TC-AMP) to the N6 group of A37, together with TsaE and TsaB. TsaD likely plays a direct catalytic role in this reaction. This Dichelobacter nodosus (strain VCS1703A) protein is tRNA N6-adenosine threonylcarbamoyltransferase.